Consider the following 602-residue polypeptide: Mating pair stabilization protein TraN (602 aa).

The N-terminal stretch at 1-18 is a signal peptide; it reads MKRILPLILALVAGMAQA.

As to quaternary structure, interacts with OmpA of recipient cells. Might form multimers. May interact with TraG. Has higher gel mobility under non-reducing conditions, suggesting it has disulfide bonds; a dsbA deletion mutant has considerably less TraN that is still localized in the outer membrane.

Its subcellular location is the cell outer membrane. Functionally, essential for F plasmid conjugative transfer. May interact with the recipient cell surface to stabilize mating pairs initiated by F-pili. May interact with TraG. Transfer requires OmpA and lipopolysaccharide (LPS), which are possibly receptors for TraN. This is Mating pair stabilization protein TraN (traN) from Escherichia coli (strain K12).